The chain runs to 387 residues: S-adenosylmethionine synthase (387 aa).

Residue E8 participates in Mg(2+) binding. H14 serves as a coordination point for ATP. E42 contributes to the K(+) binding site. E55 and Q98 together coordinate L-methionine. Residues 166–168 (DGK), 234–237 (SGRF), D245, 251–252 (RK), A268, K272, and K276 contribute to the ATP site. D245 lines the L-methionine pocket. K276 serves as a coordination point for L-methionine.

It belongs to the AdoMet synthase family. Homotetramer. It depends on Mn(2+) as a cofactor. Requires Mg(2+) as cofactor. Co(2+) serves as cofactor. The cofactor is K(+).

Its subcellular location is the cytoplasm. It catalyses the reaction L-methionine + ATP + H2O = S-adenosyl-L-methionine + phosphate + diphosphate. It functions in the pathway amino-acid biosynthesis; S-adenosyl-L-methionine biosynthesis; S-adenosyl-L-methionine from L-methionine: step 1/1. Catalyzes the formation of S-adenosylmethionine from methionine and ATP. The reaction comprises two steps that are both catalyzed by the same enzyme: formation of S-adenosylmethionine (AdoMet) and triphosphate, and subsequent hydrolysis of the triphosphate. This chain is S-adenosylmethionine synthase (METK-1), found in Ostreococcus lucimarinus (strain CCE9901).